The primary structure comprises 341 residues: S-adenosylmethionine:tRNA ribosyltransferase-isomerase (341 aa).

Belongs to the QueA family. Monomer.

Its subcellular location is the cytoplasm. The catalysed reaction is 7-aminomethyl-7-carbaguanosine(34) in tRNA + S-adenosyl-L-methionine = epoxyqueuosine(34) in tRNA + adenine + L-methionine + 2 H(+). Its pathway is tRNA modification; tRNA-queuosine biosynthesis. Its function is as follows. Transfers and isomerizes the ribose moiety from AdoMet to the 7-aminomethyl group of 7-deazaguanine (preQ1-tRNA) to give epoxyqueuosine (oQ-tRNA). This chain is S-adenosylmethionine:tRNA ribosyltransferase-isomerase, found in Clostridium kluyveri (strain NBRC 12016).